The following is a 591-amino-acid chain: PDZ and LIM domain protein 5 (591 aa).

Ser2 carries the post-translational modification N-acetylserine. Position 2 is a phosphoserine (Ser2). The region spanning 2–85 (SNYNVSLVGP…SLNMTLQRAS (84 aa)) is the PDZ domain. At Lys89 the chain carries N6-acetyllysine; alternate. Lys89 carries the post-translational modification N6-succinyllysine; alternate. Lys89 participates in a covalent cross-link: Glycyl lysine isopeptide (Lys-Gly) (interchain with G-Cter in SUMO2); alternate. 3 positions are modified to phosphoserine: Ser111, Ser134, and Ser137. 2 disordered regions span residues 125-240 (YNKV…GPPR) and 255-334 (THSD…SNRP). Polar residues predominate over residues 134-143 (SVSSPKVTSI). A compositionally biased stretch (low complexity) spans 144–161 (PSPSSAFTPAHAATSSHA). Residues 162–174 (SPPPVAAVTPPPL) show a composition bias toward pro residues. Polar residues-rich tracts occupy residues 183–195 (ANPS…SPPN) and 207–217 (PTVTSVCSESA). Phosphoserine is present on residues Ser228 and Ser260. Basic and acidic residues-rich tracts occupy residues 258-273 (DASK…DWRP) and 293-304 (EHLKESENDNAK). A compositionally biased stretch (low complexity) spans 310 to 329 (PEPSQQSASPLSAAESLESP). Residues Ser313 and Ser318 each carry the phosphoserine modification. An N6-acetyllysine modification is found at Lys346. The disordered stretch occupies residues 348 to 398 (VGSTSVKSPSWQRPNQAAPSTGRISNSASSSGTGAPMKPAVGPPQPSDQDT). The span at 349–380 (GSTSVKSPSWQRPNQAAPSTGRISNSASSSGT) shows a compositional bias: polar residues. A phosphoserine mark is found at Ser355 and Ser357. LIM zinc-binding domains follow at residues 413–472 (PMCA…FFAP), 472–531 (PECG…LFGT), and 531–591 (TICR…SVNF).

Interacts with various PKC isoforms through the LIM domains. Interacts with actin and alpha-actinin through the PDZ domain. Interacts (via LIM domains) with SIPA1L1/SPAR; this interaction may occur preferentially with isoform 1. In terms of tissue distribution, detected in brain, in neurons, including in hippocampal neurons, and glial cells (at protein level). Detected in heart and skeletal muscle.

It localises to the postsynaptic density. The protein resides in the presynapse. The protein localises to the postsynapse. Its subcellular location is the cytoplasm. It is found in the cytosol. May play an important role in the heart development by scaffolding PKC to the Z-disk region. May play a role in the regulation of cardiomyocyte expansion. Isoforms lacking the LIM domains may negatively modulate the scaffolding activity of isoform 1. Overexpression promotes the development of heart hypertrophy. Contributes to the regulation of dendritic spine morphogenesis in neurons. May be required to restrain postsynaptic growth of excitatory synapses. Isoform 1, but not isoform 2, expression favors spine thinning and elongation. In Rattus norvegicus (Rat), this protein is PDZ and LIM domain protein 5 (Pdlim5).